A 378-amino-acid chain; its full sequence is Phospho-N-acetylmuramoyl-pentapeptide-transferase (378 aa).

11 helical membrane-spanning segments follow: residues 26–46 (LFRL…TGAN), 57–77 (LPWL…VPLL), 103–123 (MGGI…TGFA), 127–147 (LSPT…IGWW), 171–191 (GIGA…ATVV), 195–215 (WGWV…VPMA), 225–245 (GLDG…GIIL), 247–267 (PYPD…GFLW), 275–295 (VFMG…IGLA), 302–322 (LLIV…QVLY), and 356–376 (IVRT…LLQW).

It belongs to the glycosyltransferase 4 family. MraY subfamily. Requires Mg(2+) as cofactor.

It localises to the cell inner membrane. The enzyme catalyses UDP-N-acetyl-alpha-D-muramoyl-L-alanyl-gamma-D-glutamyl-meso-2,6-diaminopimeloyl-D-alanyl-D-alanine + di-trans,octa-cis-undecaprenyl phosphate = di-trans,octa-cis-undecaprenyl diphospho-N-acetyl-alpha-D-muramoyl-L-alanyl-D-glutamyl-meso-2,6-diaminopimeloyl-D-alanyl-D-alanine + UMP. Its pathway is cell wall biogenesis; peptidoglycan biosynthesis. Functionally, catalyzes the initial step of the lipid cycle reactions in the biosynthesis of the cell wall peptidoglycan: transfers peptidoglycan precursor phospho-MurNAc-pentapeptide from UDP-MurNAc-pentapeptide onto the lipid carrier undecaprenyl phosphate, yielding undecaprenyl-pyrophosphoryl-MurNAc-pentapeptide, known as lipid I. This chain is Phospho-N-acetylmuramoyl-pentapeptide-transferase, found in Thermosynechococcus vestitus (strain NIES-2133 / IAM M-273 / BP-1).